A 439-amino-acid chain; its full sequence is Adenylosuccinate synthetase (439 aa).

Residues 12 to 18 (GDEGKGK) and 40 to 42 (GHT) contribute to the GTP site. Catalysis depends on Asp13, which acts as the Proton acceptor. 2 residues coordinate Mg(2+): Asp13 and Gly40. Residues 13-16 (DEGK), 38-41 (NAGH), Thr137, Arg151, Gln232, Thr247, and Arg311 contribute to the IMP site. Residue His41 is the Proton donor of the active site. 307-313 (ATTGRPR) lines the substrate pocket. Residues Arg313, 339 to 341 (KLD), and 421 to 423 (SNG) each bind GTP.

It belongs to the adenylosuccinate synthetase family. In terms of assembly, homodimer. Mg(2+) serves as cofactor.

It localises to the cytoplasm. The catalysed reaction is IMP + L-aspartate + GTP = N(6)-(1,2-dicarboxyethyl)-AMP + GDP + phosphate + 2 H(+). Its pathway is purine metabolism; AMP biosynthesis via de novo pathway; AMP from IMP: step 1/2. Functionally, plays an important role in the de novo pathway of purine nucleotide biosynthesis. Catalyzes the first committed step in the biosynthesis of AMP from IMP. The chain is Adenylosuccinate synthetase from Salinibacter ruber (strain DSM 13855 / M31).